The sequence spans 464 residues: Glycine receptor subunit alpha-3 (464 aa).

An N-terminal signal peptide occupies residues 1–33 (MAHVRHFRTLVSGFYFWEAALLLSLVATKETDS). Residues 34-255 (ARSRSAPMSP…RFHLERQMGY (222 aa)) are Extracellular-facing. The N-linked (GlcNAc...) asparagine glycan is linked to asparagine 71. Cysteine 171 and cysteine 185 are disulfide-bonded. 2 residues coordinate Zn(2+): glutamate 225 and aspartate 227. A disulfide bridge links cysteine 231 with cysteine 242. Residue 235–240 (YNTGKF) participates in strychnine binding. Histidine 248 provides a ligand contact to Zn(2+). A helical transmembrane segment spans residues 256–277 (YLIQMYIPSLLIVILSWVSFWI). Over 278–282 (NMDAA) the chain is Cytoplasmic. A helical membrane pass occupies residues 283–303 (PARVALGITTVLTMTTQSSGS). The Extracellular portion of the chain corresponds to 304-314 (RASLPKVSYVK). The helical transmembrane segment at 315 to 335 (AIDIWMAVCLLFVFSALLEYA) threads the bilayer. Over 336-430 (AVNFVSRQHK…FIDRAKKIDT (95 aa)) the chain is Cytoplasmic. Phosphoserine is present on residues serine 370 and serine 379. The chain crosses the membrane as a helical span at residues 431–451 (ISRACFPLAFLIFNIFYWVIY). Topologically, residues 452–464 (KILRHEDIHQQQD) are extracellular.

This sequence belongs to the ligand-gated ion channel (TC 1.A.9) family. Glycine receptor (TC 1.A.9.3) subfamily. GLRA3 sub-subfamily. In terms of assembly, homopentamer (in vitro). Heteropentamer composed of GLRA3 and GLRB. Both homopentamers and heteropentamers form functional ion channels, but their characteristics are subtly different. In terms of processing, phosphorylated by PKA; this causes down-regulation of channel activity. In terms of tissue distribution, widely distributed throughout the central nervous system.

It is found in the postsynaptic cell membrane. The protein localises to the perikaryon. The protein resides in the cell projection. It localises to the dendrite. Its subcellular location is the synapse. It is found in the cell membrane. The enzyme catalyses chloride(in) = chloride(out). Functionally, glycine receptors are ligand-gated chloride channels. Channel opening is triggered by extracellular glycine. Channel characteristics depend on the subunit composition; heteropentameric channels display faster channel closure. Plays an important role in the down-regulation of neuronal excitability. Contributes to the generation of inhibitory postsynaptic currents. Contributes to increased pain perception in response to increased prostaglandin E2 levels. Plays a role in cellular responses to ethanol. This is Glycine receptor subunit alpha-3 (GLRA3) from Homo sapiens (Human).